Reading from the N-terminus, the 578-residue chain is Probable arginine--tRNA ligase, mitochondrial (578 aa).

A mitochondrion-targeting transit peptide spans 1-16 (MACGFRRAIACQLSRV). L-arginine-binding positions include 133–135 (SPN), H144, Y322, D326, and Q350. Positions 133 to 144 (SPNVAKKFHVGH) match the 'HIGH' region motif. K568 bears the N6-acetyllysine mark.

Belongs to the class-I aminoacyl-tRNA synthetase family.

It is found in the mitochondrion membrane. It carries out the reaction tRNA(Arg) + L-arginine + ATP = L-arginyl-tRNA(Arg) + AMP + diphosphate. In terms of biological role, catalyzes the attachment of arginine to tRNA(Arg) in a two-step reaction: arginine is first activated by ATP to form Arg-AMP and then transferred to the acceptor end of tRNA(Arg). This is Probable arginine--tRNA ligase, mitochondrial (RARS2) from Pongo abelii (Sumatran orangutan).